The following is a 377-amino-acid chain: RNA polymerase sigma factor SigA (377 aa).

Residues 72-92 (EVSNLRQGEDHDGNDNDDFNF) form a disordered region. A sigma-70 factor domain-2 region spans residues 144–214 (LAEANLRLVV…TRAIADQART (71 aa)). The Interaction with polymerase core subunit RpoC signature appears at 168–171 (DLIQ). Residues 223-299 (ETINKLIRVS…DQEALTPADA (77 aa)) are sigma-70 factor domain-3. The sigma-70 factor domain-4 stretch occupies residues 312–365 (VLDTLTEREENVLRLRFGLDDGRTRTLEEVGKVFGVTRERIRQIEAKALRKLRH). Positions 338-357 (LEEVGKVFGVTRERIRQIEA) form a DNA-binding region, H-T-H motif.

This sequence belongs to the sigma-70 factor family. RpoD/SigA subfamily. In terms of assembly, interacts transiently with the RNA polymerase catalytic core.

It localises to the cytoplasm. Functionally, sigma factors are initiation factors that promote the attachment of RNA polymerase to specific initiation sites and are then released. This sigma factor is the primary sigma factor during exponential growth. This is RNA polymerase sigma factor SigA from Bacillus sp.